The primary structure comprises 585 residues: Zinc finger protein 496 (585 aa).

Residues 1-41 (MPTALCPRVLAPKESEEPRKMRSPPGENPSPQGEPPSPESS) are disordered. Positions 11–20 (APKESEEPRK) are enriched in basic and acidic residues. K13 is covalently cross-linked (Glycyl lysine isopeptide (Lys-Gly) (interchain with G-Cter in SUMO2)). The span at 26–38 (GENPSPQGEPPSP) shows a compositional bias: pro residues. One can recognise an SCAN box domain in the interval 42 to 124 (RRLFRRFRYQ…AAVEALEREP (83 aa)). A disordered region spans residues 141–167 (DDGDGPAAPQDLEQERMSAESQSYPDA). The residue at position 182 (S182) is a Phosphoserine. In terms of domain architecture, KRAB spans 220–294 (SPFKDMILCF…DLQDKEIPQA (75 aa)). A disordered region spans residues 358–397 (SSSGDEDSQHSPYCTEELRSPPEDLHSVPAHQSNASAEGE). Residues 373–383 (EELRSPPEDLH) are compositionally biased toward basic and acidic residues. The segment covering 387-397 (AHQSNASAEGE) has biased composition (polar residues). The segment at 405 to 427 (YVCPNCGKIFRWRVNFIRHLRSR) adopts a C2H2-type 1; degenerate zinc-finger fold. 2 C2H2-type zinc fingers span residues 433-455 (HKCS…LETH) and 461-483 (YRCT…RRIH). The disordered stretch occupies residues 483-506 (HLQPASQQPMKKSEEEALETEGTG). Residue K494 forms a Glycyl lysine isopeptide (Lys-Gly) (interchain with G-Cter in SUMO2) linkage. 2 C2H2-type zinc fingers span residues 520–543 (FQCG…RHCH) and 551–573 (FQCR…ERLH). A Nuclear localization signal motif is present at residues 575 to 579 (KRRSK).

It belongs to the krueppel C2H2-type zinc-finger protein family. As to quaternary structure, interacts (via zinc-fingers) with JARID2. Interacts with NSD1.

It is found in the nucleus. In terms of biological role, DNA-binding transcription factor that can both act as an activator and a repressor. The sequence is that of Zinc finger protein 496 (Znf496) from Mus musculus (Mouse).